The following is a 408-amino-acid chain: Argininosuccinate synthase (408 aa).

Residues 10 to 18 (AYSGGLDTS) and alanine 37 contribute to the ATP site. The L-citrulline site is built by tyrosine 90 and serine 95. Glycine 120 provides a ligand contact to ATP. Residues threonine 122, asparagine 126, and aspartate 127 each coordinate L-aspartate. An L-citrulline-binding site is contributed by asparagine 126. Residues arginine 130, serine 181, serine 190, glutamate 266, and tyrosine 278 each coordinate L-citrulline.

The protein belongs to the argininosuccinate synthase family. Type 1 subfamily. As to quaternary structure, homotetramer.

It localises to the cytoplasm. It carries out the reaction L-citrulline + L-aspartate + ATP = 2-(N(omega)-L-arginino)succinate + AMP + diphosphate + H(+). It participates in amino-acid biosynthesis; L-arginine biosynthesis; L-arginine from L-ornithine and carbamoyl phosphate: step 2/3. This is Argininosuccinate synthase from Cereibacter sphaeroides (strain ATCC 17029 / ATH 2.4.9) (Rhodobacter sphaeroides).